We begin with the raw amino-acid sequence, 210 residues long: Na(+)-translocating NADH-quinone reductase subunit D (210 aa).

A run of 6 helical transmembrane segments spans residues 14 to 34 (PIVS…ALAV), 42 to 62 (LVMT…ISIL), 72 to 92 (IIVQ…VLQA), 103 to 123 (VFVG…AYAM), 131 to 151 (FMDG…VGFI), and 178 to 198 (NGLL…IWII).

Belongs to the NqrDE/RnfAE family. Composed of six subunits; NqrA, NqrB, NqrC, NqrD, NqrE and NqrF.

The protein resides in the cell inner membrane. The enzyme catalyses a ubiquinone + n Na(+)(in) + NADH + H(+) = a ubiquinol + n Na(+)(out) + NAD(+). Its function is as follows. NQR complex catalyzes the reduction of ubiquinone-1 to ubiquinol by two successive reactions, coupled with the transport of Na(+) ions from the cytoplasm to the periplasm. NqrA to NqrE are probably involved in the second step, the conversion of ubisemiquinone to ubiquinol. The sequence is that of Na(+)-translocating NADH-quinone reductase subunit D from Shewanella halifaxensis (strain HAW-EB4).